A 157-amino-acid polypeptide reads, in one-letter code: CASP-like protein 1 (157 aa).

The Cytoplasmic portion of the chain corresponds to 1-13 (MKTEARDGGSEWR). Residues 14 to 34 (WVAIFELFLRLAAIVSTSVAV) traverse the membrane as a helical segment. Residues 35–40 (YAAMGK) lie on the Extracellular side of the membrane. Residues 41–61 (IFVVAVNGVACFYLLMSLPVS) traverse the membrane as a helical segment. Residues 62 to 82 (IFNIMRPHAYPANRVFLNIMD) are Cytoplasmic-facing. A helical transmembrane segment spans residues 83-103 (MVMVALVTAGALAAGIVYLVE). The Extracellular segment spans residues 104–121 (KAGNARASWVSVWSQFDS). A helical transmembrane segment spans residues 122 to 142 (SSCFAVLALILHVLLSGVILY). Residues 143-157 (KQALNIKFKKLDSVD) lie on the Cytoplasmic side of the membrane.

Belongs to the Casparian strip membrane proteins (CASP) family. Homodimer and heterodimers.

The protein resides in the cell membrane. The sequence is that of CASP-like protein 1 from Picea sitchensis (Sitka spruce).